The primary structure comprises 225 residues: PKHD-type hydroxylase YbiX (225 aa).

The 100-residue stretch at 78–177 folds into the Fe2OG dioxygenase domain; sequence TLSTPLFNRY…RVASFMWIQS (100 aa). Fe cation-binding residues include histidine 96, aspartate 98, and histidine 158. Arginine 168 provides a ligand contact to 2-oxoglutarate.

Fe(2+) is required as a cofactor. The cofactor is L-ascorbate.

This is PKHD-type hydroxylase YbiX from Shigella boydii serotype 4 (strain Sb227).